The chain runs to 290 residues: Picrinine-N-methytransferase TMT4 (290 aa).

The interval 71–80 is SAM motif I; that stretch reads MLDVGCGIGG. Residues 133-139 carry the Vacuolar targeting signal motif; that stretch reads DGTFDVV. Residues 134–142 are SAM motif II; it reads GTFDVVFTI. The segment at 161 to 170 is SAM motif III; sequence VAAPGAAIVI.

Belongs to the class I-like SAM-binding methyltransferase superfamily. gTMT family. As to quaternary structure, homodimer.

It is found in the vacuole membrane. It catalyses the reaction picrinine + S-adenosyl-L-methionine = ervincine + S-adenosyl-L-homocysteine + H(+). Its pathway is alkaloid biosynthesis; vindoline biosynthesis. Functionally, S-adenosyl-L-methionine-dependent N-methyltransferase involved in the biosynthesis of biologically active monoterpenoid indole alkaloids (MIAs) natural products including vindoline. Catalyzes the conversion of picrinine to N-methylpicrinine (ervincine). In Catharanthus roseus (Madagascar periwinkle), this protein is Picrinine-N-methytransferase TMT4.